The following is a 308-amino-acid chain: Glutaminase (308 aa).

Serine 65, asparagine 116, glutamate 161, asparagine 168, tyrosine 192, tyrosine 244, and valine 262 together coordinate substrate.

This sequence belongs to the glutaminase family. In terms of assembly, homotetramer.

The catalysed reaction is L-glutamine + H2O = L-glutamate + NH4(+). This Geobacillus kaustophilus (strain HTA426) protein is Glutaminase.